The chain runs to 430 residues: GTPase Obg (430 aa).

In terms of domain architecture, Obg spans 1-158 (MFVDQVKISL…LEVTLELKLL (158 aa)). The tract at residues 118–145 (RGGRGGRGNSRFATPRNPAPDFSENGEP) is disordered. Residues 159-329 (ADVGLVGFPS…LLYQIADKLE (171 aa)) form the OBG-type G domain. Residues 165–172 (GFPSVGKS), 190–194 (FTTIK), 212–215 (DLPG), 282–285 (NKMD), and 310–312 (STI) each bind GTP. Residues serine 172 and threonine 192 each contribute to the Mg(2+) site. An OCT domain is found at 352–430 (KHTPSADKFT…ILGGEFEFVE (79 aa)).

Belongs to the TRAFAC class OBG-HflX-like GTPase superfamily. OBG GTPase family. Monomer. Requires Mg(2+) as cofactor.

The protein localises to the cytoplasm. Functionally, an essential GTPase which binds GTP, GDP and possibly (p)ppGpp with moderate affinity, with high nucleotide exchange rates and a fairly low GTP hydrolysis rate. Plays a role in control of the cell cycle, stress response, ribosome biogenesis and in those bacteria that undergo differentiation, in morphogenesis control. This is GTPase Obg from Staphylococcus epidermidis (strain ATCC 35984 / DSM 28319 / BCRC 17069 / CCUG 31568 / BM 3577 / RP62A).